The following is a 630-amino-acid chain: Replication protein A 70 kDa DNA-binding subunit B (630 aa).

Positions 200-282 form a DNA-binding region, OB; sequence IIKVRVTSKG…KTVHNDYEMT (83 aa). The C4-type zinc-finger motif lies at 496-516; sequence CKTCNKKVTEAIGSGYWCEGC.

It belongs to the replication factor A protein 1 family. In terms of assembly, heterotrimer of RPA1, RPA2 and RPA3 (canonical replication protein A complex). Interacts with RPA2A. In terms of tissue distribution, expressed in root tips, roots, shoot apical meristem (SAM) and young leaves, and at lower levels in mature leaves, flag leaves and ears.

It is found in the nucleus. Its function is as follows. Component of the replication protein A complex (RPA) required for DNA recombination, repair and replication. The activity of RPA is mediated by single-stranded DNA binding and protein interactions. Probably involved in repair of double-strand DNA breaks (DSBs) induced by genotoxic stresses. In Oryza sativa subsp. japonica (Rice), this protein is Replication protein A 70 kDa DNA-binding subunit B (RPA1B).